The following is a 97-amino-acid chain: Protein YcgL (97 aa).

Positions 1 to 85 (MLCVIYRSSK…PPEDLLKQHL (85 aa)) constitute a YcgL domain.

The protein is Protein YcgL of Escherichia fergusonii (strain ATCC 35469 / DSM 13698 / CCUG 18766 / IAM 14443 / JCM 21226 / LMG 7866 / NBRC 102419 / NCTC 12128 / CDC 0568-73).